The chain runs to 399 residues: Acetate kinase (399 aa).

N7 is a Mg(2+) binding site. Residue K14 coordinates ATP. R91 is a binding site for substrate. Catalysis depends on D148, which acts as the Proton donor/acceptor. ATP-binding positions include 208–212 (HLGNG), 283–285 (DFR), and 331–335 (GLGEN). A Mg(2+)-binding site is contributed by E384.

Belongs to the acetokinase family. In terms of assembly, homodimer. Requires Mg(2+) as cofactor. Mn(2+) is required as a cofactor.

It is found in the cytoplasm. It carries out the reaction acetate + ATP = acetyl phosphate + ADP. It participates in metabolic intermediate biosynthesis; acetyl-CoA biosynthesis; acetyl-CoA from acetate: step 1/2. Catalyzes the formation of acetyl phosphate from acetate and ATP. Can also catalyze the reverse reaction. This chain is Acetate kinase, found in Desulfitobacterium hafniense (strain Y51).